A 397-amino-acid chain; its full sequence is 1-deoxy-D-xylulose 5-phosphate reductoisomerase (397 aa).

NADPH contacts are provided by Thr12, Gly13, Ser14, Ile15, Gly38, Lys39, Asn40, and Asn126. Residue Lys127 participates in 1-deoxy-D-xylulose 5-phosphate binding. Position 128 (Glu128) interacts with NADPH. Asp152 contributes to the Mn(2+) binding site. Ser153, Glu154, Ser188, and His211 together coordinate 1-deoxy-D-xylulose 5-phosphate. Glu154 serves as a coordination point for Mn(2+). Residue Gly217 coordinates NADPH. The 1-deoxy-D-xylulose 5-phosphate site is built by Ser224, Asn229, Lys230, and Glu233. Glu233 serves as a coordination point for Mn(2+).

Belongs to the DXR family. Requires Mg(2+) as cofactor. Mn(2+) serves as cofactor.

The enzyme catalyses 2-C-methyl-D-erythritol 4-phosphate + NADP(+) = 1-deoxy-D-xylulose 5-phosphate + NADPH + H(+). The protein operates within isoprenoid biosynthesis; isopentenyl diphosphate biosynthesis via DXP pathway; isopentenyl diphosphate from 1-deoxy-D-xylulose 5-phosphate: step 1/6. In terms of biological role, catalyzes the NADPH-dependent rearrangement and reduction of 1-deoxy-D-xylulose-5-phosphate (DXP) to 2-C-methyl-D-erythritol 4-phosphate (MEP). The chain is 1-deoxy-D-xylulose 5-phosphate reductoisomerase from Haemophilus influenzae (strain PittEE).